The chain runs to 273 residues: MNNRVHQGHLARKRFGQNFLNDQFVIDSIVSAINPQKGQAMVEIGPGLAALTEPVGERLDQLTVIELDRDLAARLQTHPFLGPKLTIYQQDAMTFNFGELAEKMGQPLRVFGNLPYNISTPLMFHLFSYTDAIADMHFMLQKEVVNRLVAGPNSKAYGRLSVMAQYYCNVIPVLEVPPSAFTPPPKVDSAVVRLVPHATMPYPVKDVRVLSRITTEAFNQRRKTIRNSLGNLFSVEVLTGMGIDPAMRAENISVAQYCQMANYLAENAPLQES.

S-adenosyl-L-methionine-binding residues include Asn-18, Leu-20, Gly-45, Glu-66, Asp-91, and Asn-113.

This sequence belongs to the class I-like SAM-binding methyltransferase superfamily. rRNA adenine N(6)-methyltransferase family. RsmA subfamily.

The protein localises to the cytoplasm. The enzyme catalyses adenosine(1518)/adenosine(1519) in 16S rRNA + 4 S-adenosyl-L-methionine = N(6)-dimethyladenosine(1518)/N(6)-dimethyladenosine(1519) in 16S rRNA + 4 S-adenosyl-L-homocysteine + 4 H(+). In terms of biological role, specifically dimethylates two adjacent adenosines (A1518 and A1519) in the loop of a conserved hairpin near the 3'-end of 16S rRNA in the 30S particle. May play a critical role in biogenesis of 30S subunits. The polypeptide is Ribosomal RNA small subunit methyltransferase A (Escherichia fergusonii (strain ATCC 35469 / DSM 13698 / CCUG 18766 / IAM 14443 / JCM 21226 / LMG 7866 / NBRC 102419 / NCTC 12128 / CDC 0568-73)).